Reading from the N-terminus, the 442-residue chain is D-serine dehydratase (442 aa).

Lys-118 is modified (N6-(pyridoxal phosphate)lysine).

Belongs to the serine/threonine dehydratase family. DsdA subfamily. In terms of assembly, monomer. Pyridoxal 5'-phosphate is required as a cofactor.

It carries out the reaction D-serine = pyruvate + NH4(+). This chain is D-serine dehydratase, found in Escherichia coli O81 (strain ED1a).